We begin with the raw amino-acid sequence, 286 residues long: Phycobilisome 32.1 kDa linker polypeptide, phycocyanin-associated, rod (286 aa).

One can recognise a PBS-linker domain in the interval Ala-2 to Arg-180. In terms of domain architecture, CpcD-like spans Asp-234–Ala-286.

It belongs to the phycobilisome linker protein family.

The protein localises to the cellular thylakoid membrane. In terms of biological role, rod linker protein, associated with phycocyanin. Linker polypeptides determine the state of aggregation and the location of the disk-shaped phycobiliprotein units within the phycobilisome and modulate their spectroscopic properties in order to mediate a directed and optimal energy transfer. The chain is Phycobilisome 32.1 kDa linker polypeptide, phycocyanin-associated, rod (cpcC) from Mastigocladus laminosus (Fischerella sp.).